The primary structure comprises 172 residues: Bifunctional protein PyrR (172 aa).

Positions 90-102 (LVLIDDVLMSGRT) match the PRPP-binding motif.

It belongs to the purine/pyrimidine phosphoribosyltransferase family. PyrR subfamily.

It catalyses the reaction UMP + diphosphate = 5-phospho-alpha-D-ribose 1-diphosphate + uracil. In terms of biological role, regulates the transcription of the pyrimidine nucleotide (pyr) operon in response to exogenous pyrimidines. Its function is as follows. Also displays a weak uracil phosphoribosyltransferase activity which is not physiologically significant. The protein is Bifunctional protein PyrR of Pseudomonas putida (strain W619).